The sequence spans 256 residues: Protein crossbronx-like (256 aa).

Residues 17–179 (NQGYKVLAEY…AKVSILWSCQ (163 aa)) enclose the UBC core domain.

The protein belongs to the ubiquitin-conjugating enzyme family. FTS subfamily.

The polypeptide is Protein crossbronx-like (Drosophila virilis (Fruit fly)).